The sequence spans 298 residues: Putative enoyl-CoA reductase (298 aa).

4 consecutive transmembrane segments (helical) span residues 162–182 (CVYYWTFALGIGYALCSPYYT), 189–209 (LVNASAVAMVIFELLNFAVHV), 229–249 (ILFSLVSCPNYLFEILSWVAF), and 254–274 (SMLTSWGFTFAGLVQMAEWAV).

It belongs to the steroid 5-alpha reductase family.

The protein resides in the membrane. It participates in lipid metabolism; fatty acid biosynthesis. Its function is as follows. Involved in the synthesis of fatty acids. The polypeptide is Putative enoyl-CoA reductase (Trypanosoma brucei brucei (strain 927/4 GUTat10.1)).